Here is a 109-residue protein sequence, read N- to C-terminus: uncharacterized protein (109 aa).

It belongs to the archaeal ATPase family.

This is an uncharacterized protein from Methanocaldococcus jannaschii (strain ATCC 43067 / DSM 2661 / JAL-1 / JCM 10045 / NBRC 100440) (Methanococcus jannaschii).